Consider the following 41-residue polypeptide: uncharacterized protein (41 aa).

Residues 1-23 (MNFLMRAIFSLLLLFTLSIPVIS) form the signal peptide.

This is an uncharacterized protein from Escherichia coli (strain K12).